The primary structure comprises 489 residues: 3-octaprenyl-4-hydroxybenzoate carboxy-lyase (489 aa).

Position 172 (N172) interacts with Mn(2+). Prenylated FMN is bound by residues 175-177, 189-191, and 194-195; these read IYR, RWL, and RG. Mn(2+) is bound at residue E238. D287 serves as the catalytic Proton donor.

It belongs to the UbiD family. Homohexamer. Prenylated FMN serves as cofactor. Requires Mn(2+) as cofactor.

Its subcellular location is the cell membrane. It carries out the reaction a 4-hydroxy-3-(all-trans-polyprenyl)benzoate + H(+) = a 2-(all-trans-polyprenyl)phenol + CO2. Its pathway is cofactor biosynthesis; ubiquinone biosynthesis. Catalyzes the decarboxylation of 3-octaprenyl-4-hydroxy benzoate to 2-octaprenylphenol, an intermediate step in ubiquinone biosynthesis. This is 3-octaprenyl-4-hydroxybenzoate carboxy-lyase from Salmonella arizonae (strain ATCC BAA-731 / CDC346-86 / RSK2980).